The following is a 138-amino-acid chain: Large ribosomal subunit protein uL16 (138 aa).

A compositionally biased stretch (basic residues) spans 1–13 (MLQPARRKYRKEQ). Residues 1–20 (MLQPARRKYRKEQKGRNTGV) are disordered.

This sequence belongs to the universal ribosomal protein uL16 family. In terms of assembly, part of the 50S ribosomal subunit.

Binds 23S rRNA and is also seen to make contacts with the A and possibly P site tRNAs. In Verminephrobacter eiseniae (strain EF01-2), this protein is Large ribosomal subunit protein uL16.